We begin with the raw amino-acid sequence, 495 residues long: Dihydrolipoyl dehydrogenase, mitochondrial (495 aa).

FAD contacts are provided by residues Glu59 to Cys68, Lys77, and Ser169 to Ser171. The cysteines at positions 68 and 73 are disulfide-linked. Residues Gly206–Glu213, Glu229, Val264, and Gly299 each bind NAD(+). Residues Asp340 and Met346–His349 each bind FAD. The active-site Proton acceptor is the His472.

It belongs to the class-I pyridine nucleotide-disulfide oxidoreductase family. It depends on FAD as a cofactor.

Its subcellular location is the mitochondrion matrix. It carries out the reaction N(6)-[(R)-dihydrolipoyl]-L-lysyl-[protein] + NAD(+) = N(6)-[(R)-lipoyl]-L-lysyl-[protein] + NADH + H(+). The chain is Dihydrolipoyl dehydrogenase, mitochondrial (dld-1) from Caenorhabditis elegans.